The following is a 229-amino-acid chain: Matrix protein (229 aa).

The span at 1 to 10 (MSSLKKILGL) shows a compositional bias: low complexity. Residues 1–23 (MSSLKKILGLKGKGKKSKKLGIA) are disordered. The short motif at 2–4 (SSL) is the dynamin binding element. The short motif at 24-27 (PPPY) is the PPXY motif element. A PTAP/PSAP motif motif is present at residues 37–40 (PSAP).

The protein belongs to the vesiculoviruses matrix protein family. As to quaternary structure, homomultimer. Interacts with viral nucleocapsid; this interaction contributes to the virion assembly. Interacts with the viral envelope glycoprotein; this interaction contributes to the virion assembly. Interacts with host RAE1-NUP98 complex. Interacts with host NEDD4 and TSG101. Interacts with host dynamin. Interacts with host NDUFAF4; the interaction inhibits viral propagation and is independent of interferon activation. Interacts with host GTF2H5; the interaction may inhibit host transcription. Phosphorylated by host.

The protein resides in the virion. Its subcellular location is the host endomembrane system. The protein localises to the host nucleus membrane. It is found in the host nucleus. It localises to the host cytoplasm. Functionally, forms a double layer around the helical nucleocapsid, the inner matrix layer binding to the N helix and the outer matrix layer binding to the envelope glycoprotein. Plays a major role in assembly and budding of virion, by recruiting cellular partners of the ESCRT complexes that play a key role in releasing the budding particle from the host membrane. Condensates the ribonucleocapsid core during virus assembly. Inhibits the host mRNA nuclear export thereby inducing the shut off of cellular transcription and preventing the interferon signaling and the establishment of antiviral state in infected cells. This shutoff presumably inhibits interferon signaling and thus establishment of antiviral state in virus infected cells. Induces cell-rounding, cytoskeleton disorganization and apoptosis in infected cell. Inhibits host transcription, possibly through interaction with host DNA repair factor IIH/TFIIH GTF2H5 subunit. This Aedes (Bovine) protein is Matrix protein (M).